We begin with the raw amino-acid sequence, 166 residues long: FMN reductase (NADH) RutF (166 aa).

This sequence belongs to the non-flavoprotein flavin reductase family. RutF subfamily.

It carries out the reaction FMNH2 + NAD(+) = FMN + NADH + 2 H(+). Its function is as follows. Catalyzes the reduction of FMN to FMNH2 which is used to reduce pyrimidine by RutA via the Rut pathway. This chain is FMN reductase (NADH) RutF, found in Cronobacter turicensis (strain DSM 18703 / CCUG 55852 / LMG 23827 / z3032).